Here is an 852-residue protein sequence, read N- to C-terminus: MSSVSPIQIPSRLPLLLTHESVLLPGSTMRTSVDTARNLQLVRSRLLKGTSLQSTILGVIPNTPDPASDTQDLPPLHRIGTAALAVQVVGSNWPKPHYTLLITGLCRFQIVQVLKEKPYPVAEVEQLDRLEEFPNICKSREELGELSEQFYRYAVQLVEMLDMSVPAVAKLRRLLDNLPREALPDILTSIIRTSNKEKLQILDAVSLEDRFKMTIPLLVRQIEGLKLLQKTRKPKQDDDKRVIAIRPIRRIPHIPGTLEDEEEEEDNDDIVMLEKKIRTSSMPEQAHKVCVKEIKRLKKMPQSMPEYALTRNYLELMVELPWNKSTTDRLDIRAARILLDNDHYAMEKLKRRVLEYLAVRQLKNNLKGPILCFVGPPGVGKTSVGRSVAKTLGREFHRIALGGVCDQSDIRGHRRTYVGSMPGRIINGLKTVGVNNPVFLLDEVDKLGKSLQGDPAAALLEVLDPEQNHNFTDHYLNVAFDLSQVLFIATANTTATIPPALLDRMEIIQVPGYTQEEKIEIAHRHLIPKQLEQHGLTPQQIQIPQHTTLAIITRYTREAGVRSLDRKFGAICRAVAVKVAEGQHKEAKLDRSDVADGEGCKEHVLEDAKPESISDTADLALPPEMPILIDSHALKDILGPPLYELEVSERLSQPGVAIGLAWTPLGGKIMFVEASRMDGEGQLTLTGQLGDVMKESAHLAISWLRSNAKKYHLTNAFGSFDLLDNTDIHLHFPAGAVTKDGPSAGVTIVTCLASLFSGRLVRSDVAMTGEITLRGLVLPVGGIKDKVLAAHRAGLKQIIIPQRNEKDLEEIPSNVRQDLSFVTASCLDEVLNAAFDGGFPVKTRPGLIDSKL.

S2 is modified (N-acetylserine). Residues 13–222 (LPLLLTHESV…MTIPLLVRQI (210 aa)) enclose the Lon N-terminal domain. Residue 375-382 (GPPGVGKT) coordinates ATP. Residues 651-837 (LSQPGVAIGL…DEVLNAAFDG (187 aa)) form the Lon proteolytic domain. Active-site residues include S743 and K786. The short motif at 850–852 (SKL) is the Microbody targeting signal element.

It belongs to the peptidase S16 family. As to quaternary structure, interacts with PEX5. Interacts with TYSND1. May interact with enzymes involved in beta-oxidation of fatty acids, including ACOX1/AOX.

The protein localises to the peroxisome matrix. The enzyme catalyses Hydrolysis of proteins in presence of ATP.. ATP-dependent serine protease that mediates the selective degradation of misfolded and unassembled polypeptides in the peroxisomal matrix. Necessary for type 2 peroxisome targeting signal (PTS2)-containing protein processing and facilitates peroxisome matrix protein import. May indirectly regulate peroxisomal fatty acid beta-oxidation through degradation of the self-processed forms of TYSND1. This is Lon protease homolog 2, peroxisomal (Lonp2) from Mus musculus (Mouse).